Reading from the N-terminus, the 786-residue chain is E3 ubiquitin-protein ligase UHRF1 (786 aa).

The Ubiquitin-like domain maps to 1-78; sequence MWIQVRTMDG…IQLLVRQSLV (78 aa). Residues serine 76, serine 98, and serine 102 each carry the phosphoserine modification. The tract at residues 82-134 is disordered; it reads PVPSSSGGSKERDSELSDTDSGCGLAQSESDKSSNSGEAANEPEGKADEDECD. Tudor-like stretches follow at residues 139–213 and 220–287; these read GLYK…ARAR and DLQV…IERP. Lysine 283 is covalently cross-linked (Glycyl lysine isopeptide (Lys-Gly) (interchain with G-Cter in SUMO2)). Positions 300–305 are linker; sequence RKSGPS. Serine 302 is modified (phosphoserine; by PKA). The PHD-type zinc-finger motif lies at 303 to 370; it reads GPSCKHCKDD…EWYCPDCRID (68 aa). Histone H3R2me0 binding stretches follow at residues 337–341 and 357–359; these read CDECD and PPE. Serine 372 carries the phosphoserine modification. A Glycyl lysine isopeptide (Lys-Gly) (interchain with G-Cter in SUMO2) cross-link involves residue lysine 389. Residue lysine 403 is modified to N6-acetyllysine. The YDG domain occupies 423 to 586; that stretch reads GPIPGIPVGT…FLVWRFLLRR (164 aa). Positions 449-450 are required to promote base flipping; sequence HV. Residues 467-468 and aspartate 473 contribute to the DNA site; that span reads AG. Required for formation of a 5-methylcytosine-binding pocket regions lie at residues 470-473 and 482-485; these read YEDD and YTGS. N6-acetyllysine; alternate is present on lysine 550. A Glycyl lysine isopeptide (Lys-Gly) (interchain with G-Cter in SUMO2); alternate cross-link involves residue lysine 550. The interval 626 to 679 is disordered; that stretch reads NSKQAALDKEEEDGEEGFTSPRKGKRKSKSAGGDGSSRGTPKKTKVEPYSLTTQ. A Phosphoserine; by CDK1 modification is found at serine 645. Serine 655 and serine 662 each carry phosphoserine. Lysine 670 is covalently cross-linked (Glycyl lysine isopeptide (Lys-Gly) (interchain with G-Cter in SUMO2)). The RING-type zinc finger occupies 717–756; the sequence is CICCQELVFRPITTVCQHNVCKDCLDRSFKAQVFSCPACR.

Interacts with DNMT3A and DNMT3B. Interacts with DNMT1; the interaction is direct. Interacts with USP7; leading to its deubiquitination. Interacts with histone H3. Interacts with HDAC1, but not with HDAC2. Interacts with BLTP3A. Interacts with PML. Interacts with EHMT2. Binds methylated CpG containing oligonucleotides. Interacts with ZNF263; recruited to the SIX3 promoter along with other proteins involved in chromatin modification and transcriptional corepression where it contributes to transcriptional repression. Interacts with UHRF2. Interacts with FANCD2. Interacts with TET1 isoform 2; this interaction induces the recruitment of TET1 isoform 2 to replicating heterochromatin. Phosphorylation at Ser-302 of the linker region decreases the binding to H3K9me3. Phosphorylation at Ser-645 by CDK1 during M phase impairs interaction with USP7, preventing deubiquitination and leading to degradation by the proteasome. In terms of processing, ubiquitinated; which leads to proteasomal degradation. Autoubiquitinated; interaction with USP7 leads to deubiquitination and prevents degradation. Ubiquitination and degradation takes place during M phase, when phosphorylation at Ser-645 prevents interaction with USP7 and subsequent deubiquitination. Polyubiquitination may be stimulated by DNA damage.

Its subcellular location is the nucleus. It carries out the reaction S-ubiquitinyl-[E2 ubiquitin-conjugating enzyme]-L-cysteine + [acceptor protein]-L-lysine = [E2 ubiquitin-conjugating enzyme]-L-cysteine + N(6)-ubiquitinyl-[acceptor protein]-L-lysine.. The protein operates within protein modification; protein ubiquitination. Multidomain protein that acts as a key epigenetic regulator by bridging DNA methylation and chromatin modification. Specifically recognizes and binds hemimethylated DNA at replication forks via its YDG domain and recruits DNMT1 methyltransferase to ensure faithful propagation of the DNA methylation patterns through DNA replication. In addition to its role in maintenance of DNA methylation, also plays a key role in chromatin modification: through its tudor-like regions and PHD-type zinc fingers, specifically recognizes and binds histone H3 trimethylated at 'Lys-9' (H3K9me3) and unmethylated at 'Arg-2' (H3R2me0), respectively, and recruits chromatin proteins. Enriched in pericentric heterochromatin where it recruits different chromatin modifiers required for this chromatin replication. Also localizes to euchromatic regions where it negatively regulates transcription possibly by impacting DNA methylation and histone modifications. Has E3 ubiquitin-protein ligase activity by mediating the ubiquitination of target proteins such as histone H3 and PML. It is still unclear how E3 ubiquitin-protein ligase activity is related to its role in chromatin in vivo. Plays a role in DNA repair by cooperating with UHRF2 to ensure recruitment of FANCD2 to interstrand cross-links (ICLs) leading to FANCD2 activation. Plays a pivotal role in the establishment of correct spindle architecture by catalyzing the 'Lys-63'-linked ubiquitination of KIF11, thereby controlling KIF11 localization on the spindle. The polypeptide is E3 ubiquitin-protein ligase UHRF1 (UHRF1) (Bos taurus (Bovine)).